The primary structure comprises 296 residues: NAD kinase (296 aa).

Asp-72 acts as the Proton acceptor in catalysis. Residues Asp-72–Gly-73, Asn-146–Asp-147, Arg-157, Lys-174, Asp-176, Thr-187–Ser-192, and Gln-247 each bind NAD(+).

This sequence belongs to the NAD kinase family. It depends on a divalent metal cation as a cofactor.

It localises to the cytoplasm. The enzyme catalyses NAD(+) + ATP = ADP + NADP(+) + H(+). Its function is as follows. Involved in the regulation of the intracellular balance of NAD and NADP, and is a key enzyme in the biosynthesis of NADP. Catalyzes specifically the phosphorylation on 2'-hydroxyl of the adenosine moiety of NAD to yield NADP. The sequence is that of NAD kinase from Pseudomonas fluorescens (strain SBW25).